The following is a 942-amino-acid chain: tRNAse Z TRZ4, mitochondrial (942 aa).

The transit peptide at 1-50 (MLTSSMPQNLSLFGFSPLKSSSFALILRPFSLYPPIFASSSPAPSRRPPR) directs the protein to the mitochondrion. The tract at residues 38-85 (ASSSPAPSRRPPRTAGYRRSGPSPPRRKWSSFEEQKRKGRSPMEKDKA) is disordered. Residues 67 to 85 (SSFEEQKRKGRSPMEKDKA) are compositionally biased toward basic and acidic residues.

The protein belongs to the RNase Z family. In terms of assembly, homodimer. Zn(2+) is required as a cofactor. Requires Ca(2+) as cofactor. It depends on Mn(2+) as a cofactor. Mg(2+) serves as cofactor.

The protein localises to the mitochondrion. The catalysed reaction is Endonucleolytic cleavage of RNA, removing extra 3' nucleotides from tRNA precursor, generating 3' termini of tRNAs. A 3'-hydroxy group is left at the tRNA terminus and a 5'-phosphoryl group is left at the trailer molecule.. Its function is as follows. Zinc phosphodiesterase, which displays tRNA 3'-processing endonuclease activity. Involved in tRNA maturation, by removing a 3'-trailer from precursor tRNA. Can process the mitochondrial tRNA-like structures (t-elements). The sequence is that of tRNAse Z TRZ4, mitochondrial from Arabidopsis thaliana (Mouse-ear cress).